A 113-amino-acid chain; its full sequence is Large ribosomal subunit protein uL22 (113 aa).

It belongs to the universal ribosomal protein uL22 family. Part of the 50S ribosomal subunit.

Its function is as follows. This protein binds specifically to 23S rRNA; its binding is stimulated by other ribosomal proteins, e.g. L4, L17, and L20. It is important during the early stages of 50S assembly. It makes multiple contacts with different domains of the 23S rRNA in the assembled 50S subunit and ribosome. The globular domain of the protein is located near the polypeptide exit tunnel on the outside of the subunit, while an extended beta-hairpin is found that lines the wall of the exit tunnel in the center of the 70S ribosome. In Pelotomaculum thermopropionicum (strain DSM 13744 / JCM 10971 / SI), this protein is Large ribosomal subunit protein uL22.